The following is a 910-amino-acid chain: Eukaryotic translation initiation factor 3 subunit C (910 aa).

A disordered region spans residues 1–21; that stretch reads MSRFFANGSESESESSEEEIQ. Residues 11-20 are compositionally biased toward acidic residues; it reads SESESSEEEI. Phosphoserine occurs at positions 34, 165, 176, and 185. Residues 157 to 279 are disordered; the sequence is FREAPDQESE…IRKRAEDDED (123 aa). Positions 162–186 are enriched in acidic residues; sequence DQESEAEDEVVALESDGGDAGDDSD. Low complexity predominate over residues 194-207; that stretch reads AVPKAVKSAPAKAA. The span at 209-235 shows a compositional bias: acidic residues; the sequence is ADDDDSDDSIDWDSDSESETESSDDEN. The segment covering 240 to 268 has biased composition (basic and acidic residues); that stretch reads MRERFLKRTTEKEEKDDDKRKDKRKEQKT. A PCI domain is found at 639-815; sequence FHMHINLELL…ETVGMHRSEP (177 aa). Positions 847-910 are disordered; sequence FFQRGNMGNR…QQQVQTIDEE (64 aa). A compositionally biased stretch (low complexity) spans 862 to 874; that stretch reads NRNQNNQGGNWLG. Residues 882-891 show a composition bias toward basic residues; sequence RNRNQRGHHK. Residues 895–910 are compositionally biased toward low complexity; that stretch reads DRQQQQQQQVQTIDEE.

Belongs to the eIF-3 subunit C family. Component of the eukaryotic translation initiation factor 3 (eIF-3) complex. The eIF-3 complex interacts with pix.

Its subcellular location is the cytoplasm. Its function is as follows. Component of the eukaryotic translation initiation factor 3 (eIF-3) complex, which is involved in protein synthesis of a specialized repertoire of mRNAs and, together with other initiation factors, stimulates binding of mRNA and methionyl-tRNAi to the 40S ribosome. The eIF-3 complex specifically targets and initiates translation of a subset of mRNAs involved in cell proliferation. This Drosophila melanogaster (Fruit fly) protein is Eukaryotic translation initiation factor 3 subunit C.